The chain runs to 670 residues: Solute carrier organic anion transporter family member 1A2 (670 aa).

The Cytoplasmic segment spans residues 1–20; that stretch reads MGETEKRIETHRIRCLSKLK. A helical membrane pass occupies residues 21 to 40; it reads MFLLAITCAFVSKTLSGSYM. Topologically, residues 41–59 are extracellular; the sequence is NSMLTQIERQFNIPTSLVG. A helical transmembrane segment spans residues 60-80; that stretch reads FINGSFEIGNLLLIIFVSYFG. The Cytoplasmic portion of the chain corresponds to 81–86; that stretch reads TKLHRP. A helical membrane pass occupies residues 87-111; that stretch reads IMIGIGCVVMGLGCFLKSLPHFLMN. The Extracellular segment spans residues 112–155; it reads QYEYESTVSVSGNLSSNSFLCMENGTQILRPTQDPSECTKEVKS. N-linked (GlcNAc...) asparagine glycans are attached at residues asparagine 124 and asparagine 135. Residues 156 to 184 traverse the membrane as a helical segment; the sequence is LMWVYVLVGNIVRGMGETPILPLGISYIE. The Cytoplasmic segment spans residues 185-203; the sequence is DFAKFENSPLYIGLVETGA. A helical membrane pass occupies residues 204-224; it reads IIGPLIGLLLASFCANVYVDT. Topologically, residues 225-242 are extracellular; that stretch reads GFVNTDDLIITPTDTRWV. Residues 243–267 form a helical membrane-spanning segment; sequence GAWWFGFLICAGVNVLTAIPFFFLP. Topologically, residues 268–311 are cytoplasmic; sequence NTLPKEGLETNADIIKNENEDKQKEEVKKEKYGITKDFLPFMKS. A helical transmembrane segment spans residues 312-333; it reads LSCNPIYMLFILVSVIQFNAFV. Residues 334–353 lie on the Extracellular side of the membrane; that stretch reads NMISFMPKYLEQQYGISSSD. Residues 354–377 traverse the membrane as a helical segment; sequence AIFLMGIYNLPPICIGYIIGGLIM. Over 378 to 381 the chain is Cytoplasmic; sequence KKFK. The chain crosses the membrane as a helical span at residues 382–405; sequence ITVKQAAHIGCWLSLLEYLLYFLS. At 406–513 the chain is on the extracellular side; that stretch reads FLMTCENSSV…PDCSLMLQYF (108 aa). N-linked (GlcNAc...) asparagine glycosylation is found at asparagine 412 and asparagine 419. Residues 433-488 enclose the Kazal-like domain; sequence NDIFADCNVDCNCPSKIWDPVCGNNGLSYLSACLAGCETSIGTGINMVFQNCSCIQ. Intrachain disulfides connect cysteine 439/cysteine 469, cysteine 445/cysteine 465, and cysteine 454/cysteine 486. Residues 514–536 traverse the membrane as a helical segment; the sequence is LILSAMSSFIYSLAAIPGYMVLL. Over 537–545 the chain is Cytoplasmic; that stretch reads RCMKSEEKS. Residues 546–571 traverse the membrane as a helical segment; it reads LGVGLHTFCTRVFAGIPAPIYFGALM. At 572–605 the chain is on the extracellular side; sequence DSTCLHWGTLKCGESGACRIYDSTTFRYIYLGLP. A helical transmembrane segment spans residues 606–623; it reads AALRGSSFVPALIILILL. Residues 624 to 670 are Cytoplasmic-facing; sequence RKCHLPGENASSGTELIETKVKGKENECKDIYQKSTVLKDDELKTKL.

The protein belongs to the organo anion transporter (TC 2.A.60) family. In terms of tissue distribution, higher expression in the brain than in liver and kidney. Expressed in brain neurons in both cortex and hippocampus. Expressed in placental trophoblasts. Also expressed in lung and testes at lower levels. Expressed in the eye (at protein level). Expressed in the retina in the outer and inner nuclear layers, the inner plexiform layer and the ganglion cell layer. Expressed in liver and prostate. In testis, primarily localized to the basal membrane of Sertoli cells and weakly expressed in Leydig cells and within the tubules. Expressed in fetal brain and liver.

It localises to the cell membrane. The protein localises to the basal cell membrane. It catalyses the reaction taurocholate(out) = taurocholate(in). It carries out the reaction glycocholate(out) = glycocholate(in). The enzyme catalyses taurochenodeoxycholate(out) = taurochenodeoxycholate(in). The catalysed reaction is tauroursodeoxycholate(out) = tauroursodeoxycholate(in). It catalyses the reaction dehydroepiandrosterone 3-sulfate(out) = dehydroepiandrosterone 3-sulfate(in). It carries out the reaction estrone 3-sulfate(out) = estrone 3-sulfate(in). The enzyme catalyses 3,3',5'-triiodo-L-thyronine(out) = 3,3',5'-triiodo-L-thyronine(in). The catalysed reaction is L-thyroxine(out) = L-thyroxine(in). It catalyses the reaction taurodeoxycholate(out) = taurodeoxycholate(in). It carries out the reaction glycodeoxycholate(out) = glycodeoxycholate(in). The enzyme catalyses glycochenodeoxycholate(out) = glycochenodeoxycholate(in). The catalysed reaction is glycoursodeoxycholate(out) = glycoursodeoxycholate(in). It catalyses the reaction 17beta-estradiol 17-O-(beta-D-glucuronate)(out) = 17beta-estradiol 17-O-(beta-D-glucuronate)(in). It carries out the reaction prostaglandin E2(out) = prostaglandin E2(in). The enzyme catalyses substance P(out) = substance P(in). Transport activity is inhibited by the grapefruit juice component naringin. Its function is as follows. Na(+)-independent transporter that mediates the cellular uptake of a broad range of organic anions such as the endogenous bile salts cholate and deoxycholate, either in their unconjugated or conjugated forms (taurocholate and glycocholate), at the plasmam membrane. Responsible for intestinal absorption of bile acids. Transports dehydroepiandrosterone 3-sulfate (DHEAS), a major circulating steroid secreted by the adrenal cortex, as well as estrone 3-sulfate and 17beta-estradiol 17-O-(beta-D-glucuronate). Mediates apical uptake of all-trans-retinol (atROL) across human retinal pigment epithelium, which is essential to maintaining the integrity of the visual cycle and thus vision. Involved in the uptake of clinically used drugs. Capable of thyroid hormone transport (both T3 or 3,3',5'-triiodo-L-thyronine, and T4 or L-tyroxine). Also transports prostaglandin E2. Plays roles in blood-brain and -cerebrospinal fluid barrier transport of organic anions and signal mediators, and in hormone uptake by neural cells. May also play a role in the reuptake of neuropeptides such as substance P/TAC1 and vasoactive intestinal peptide/VIP released from retinal neurons. May play an important role in plasma and tissue distribution of the structurally diverse chemotherapeutic drugs methotrexate and paclitaxel. Shows a pH-sensitive substrate specificity which may be ascribed to the protonation state of the binding site and leads to a stimulation of substrate transport in an acidic microenvironment. Hydrogencarbonate/HCO3(-) acts as the probable counteranion that exchanges for organic anions. May contribute to regulate the transport of organic compounds in testis across the blood-testis-barrier. This chain is Solute carrier organic anion transporter family member 1A2 (SLCO1A2), found in Homo sapiens (Human).